The primary structure comprises 1136 residues: Rho GTPase-activating protein 45 (1136 aa).

Disordered stretches follow at residues 1-73 and 91-110; these read MFSR…RHAS and HRSP…GAGP. S23, S25, S73, S93, and S99 each carry phosphoserine. The F-BAR domain occupies 269–539; the sequence is EEVDVLLQRC…SSKLYDPGQQ (271 aa). 2 coiled-coil regions span residues 376 to 412 and 440 to 499; these read EHEK…YVQR and TATK…RQSD. A phosphoserine mark is found at S569, S578, S592, and S619. The interval 583 to 662 is disordered; the sequence is DVARPEAAGS…SSTEELVDPD (80 aa). The segment covering 646 to 655 has biased composition (low complexity); sequence TSSSGTMSST. The Phorbol-ester/DAG-type zinc-finger motif lies at 702-747; the sequence is THRLRKLRTPAKCRECNSYVYFQGAECEECCLACHKKCLETLAIQC. The Rho-GAP domain occupies 761–974; it reads QDFSHAARSA…TLIVHYGLVF (214 aa). Phosphoserine occurs at positions 949, 1027, 1030, and 1032. Residues 1061–1136 form a disordered region; it reads EASLEVASGS…SCRERQPEFV (76 aa). The segment covering 1095-1109 has biased composition (polar residues); sequence QQLSGFNTNQSNNVL.

As to quaternary structure, HA-1 forms a complex with MHC class I HLA-A*0201. As to expression, expressed on cells of the hematopoietic lineage. Detected in dendritic cells and epidermal Langerhans cells. Expressed in peripheral blood mononuclear cells, in all leukemia/lymphoma cell lines. Detected also in some solid tumors and tissues such as cancerous and non-cancerous tissue.

The protein localises to the cytoplasm. The protein resides in the cell projection. It localises to the ruffle membrane. Its function is as follows. Contains a GTPase activator for the Rho-type GTPases (RhoGAP) domain that would be able to negatively regulate the actin cytoskeleton as well as cell spreading. However, also contains N-terminally a BAR-domin which is able to play an autoinhibitory effect on this RhoGAP activity. Functionally, precursor of the histocompatibility antigen HA-1. More generally, minor histocompatibility antigens (mHags) refer to immunogenic peptide which, when complexed with MHC, can generate an immune response after recognition by specific T-cells. The peptides are derived from polymorphic intracellular proteins, which are cleaved by normal pathways of antigen processing. The binding of these peptides to MHC class I or class II molecules and its expression on the cell surface can stimulate T-cell responses and thereby trigger graft rejection or graft-versus-host disease (GVHD) after hematopoietic stem cell transplantation from HLA-identical sibling donor. GVHD is a frequent complication after bone marrow transplantation (BMT), due to mismatch of minor histocompatibility antigen in HLA-matched sibling marrow transplants. Specifically, mismatching for mHag HA-1 which is recognized as immunodominant, is shown to be associated with the development of severe GVHD after HLA-identical BMT. HA-1 is presented to the cell surface by MHC class I HLA-A*0201, but also by other HLA-A alleles. This complex specifically elicits donor-cytotoxic T-lymphocyte (CTL) reactivity against hematologic malignancies after treatment by HLA-identical allogenic BMT. It induces cell recognition and lysis by CTL. In Homo sapiens (Human), this protein is Rho GTPase-activating protein 45.